The sequence spans 162 residues: 6,7-dimethyl-8-ribityllumazine synthase (162 aa).

Residues phenylalanine 22, 56–58, and 80–82 each bind 5-amino-6-(D-ribitylamino)uracil; these read TFE and AVI. A (2S)-2-hydroxy-3-oxobutyl phosphate-binding site is contributed by 85–86; sequence GT. Histidine 88 serves as the catalytic Proton donor. Residue methionine 113 participates in 5-amino-6-(D-ribitylamino)uracil binding. Arginine 127 contributes to the (2S)-2-hydroxy-3-oxobutyl phosphate binding site.

Belongs to the DMRL synthase family.

It carries out the reaction (2S)-2-hydroxy-3-oxobutyl phosphate + 5-amino-6-(D-ribitylamino)uracil = 6,7-dimethyl-8-(1-D-ribityl)lumazine + phosphate + 2 H2O + H(+). The protein operates within cofactor biosynthesis; riboflavin biosynthesis; riboflavin from 2-hydroxy-3-oxobutyl phosphate and 5-amino-6-(D-ribitylamino)uracil: step 1/2. In terms of biological role, catalyzes the formation of 6,7-dimethyl-8-ribityllumazine by condensation of 5-amino-6-(D-ribitylamino)uracil with 3,4-dihydroxy-2-butanone 4-phosphate. This is the penultimate step in the biosynthesis of riboflavin. This is 6,7-dimethyl-8-ribityllumazine synthase from Anaeromyxobacter dehalogenans (strain 2CP-1 / ATCC BAA-258).